The following is a 178-amino-acid chain: Interleukin-10 (178 aa).

The signal sequence occupies residues 1 to 18 (MHSSALLCCLVLLTGVRA). 2 disulfides stabilise this stretch: Cys-30/Cys-126 and Cys-80/Cys-132. Asn-134 carries an N-linked (GlcNAc...) asparagine glycan.

This sequence belongs to the IL-10 family. Homodimer. Interacts with IL10RA and IL10RB.

Its subcellular location is the secreted. Its function is as follows. Major immune regulatory cytokine that acts on many cells of the immune system where it has profound anti-inflammatory functions, limiting excessive tissue disruption caused by inflammation. Mechanistically, IL10 binds to its heterotetrameric receptor comprising IL10RA and IL10RB leading to JAK1 and STAT2-mediated phosphorylation of STAT3. In turn, STAT3 translocates to the nucleus where it drives expression of anti-inflammatory mediators. Targets antigen-presenting cells (APCs) such as macrophages and monocytes and inhibits their release of pro-inflammatory cytokines including granulocyte-macrophage colony-stimulating factor /GM-CSF, granulocyte colony-stimulating factor/G-CSF, IL-1 alpha, IL-1 beta, IL-6, IL-8 and TNF-alpha. Also interferes with antigen presentation by reducing the expression of MHC-class II and co-stimulatory molecules, thereby inhibiting their ability to induce T cell activation. In addition, controls the inflammatory response of macrophages by reprogramming essential metabolic pathways including mTOR signaling. In Cercocebus atys (Sooty mangabey), this protein is Interleukin-10 (IL10).